Reading from the N-terminus, the 428-residue chain is MMTYQEIFNEIKNKAYFKNHRHVLIAVSGGVDSMNLLHFLYLFQDKLKIRIGIAHVNHKQRSESDSEEAYLKCWAKKHDIPIYVSNFEGIFSEKAARDWRYAFFKSIMLKNNYSALVTAHHSDDQAETILMRLIRGSRLRHLSGIKSVQPFANGQLIRPFLTFSKKDLPEIFHFEDSSNRELSFLRNRVRNNYLPLLKQENPRFIQGLNQLALENSLLFQAFKELTNHITTTDLTEFNEQSKSIQYFLLQDYLEGFPDLDLKKSQFTQLLQIIQTAKQGYYYLKKDYYIFIDKFSFKITKIVPKTELVKEEKMLEYDSNLCYRDYYFSFMPKSNEDQGQVSIPLFSLSSIKLRSRQSGDYISFGHFSKKIRRLFIDEKFTIAERQNAIIGEQDEQIIFVLIGNKTYLRKACKHDIMLAKLYIDKLEKG.

ATP is bound at residue S28–S33.

This sequence belongs to the tRNA(Ile)-lysidine synthase family.

Its subcellular location is the cytoplasm. The enzyme catalyses cytidine(34) in tRNA(Ile2) + L-lysine + ATP = lysidine(34) in tRNA(Ile2) + AMP + diphosphate + H(+). Its function is as follows. Ligates lysine onto the cytidine present at position 34 of the AUA codon-specific tRNA(Ile) that contains the anticodon CAU, in an ATP-dependent manner. Cytidine is converted to lysidine, thus changing the amino acid specificity of the tRNA from methionine to isoleucine. The sequence is that of tRNA(Ile)-lysidine synthase from Streptococcus pyogenes serotype M1.